The following is a 70-amino-acid chain: Putative membrane protein insertion efficiency factor (70 aa).

It belongs to the UPF0161 family.

The protein localises to the cell membrane. Functionally, could be involved in insertion of integral membrane proteins into the membrane. In Clostridium novyi (strain NT), this protein is Putative membrane protein insertion efficiency factor.